Here is a 437-residue protein sequence, read N- to C-terminus: Bystin (437 aa).

A disordered region spans residues 1–105 (MPKFKAARGV…DGSDDEDEEW (105 aa)). R40 is modified (omega-N-methylarginine). Position 55 is a phosphoserine (S55). The segment covering 71-87 (AEHGTGDKPAAPRERTT) has biased composition (basic and acidic residues). A Phosphoserine modification is found at S98. T156 carries the phosphothreonine modification. 2 positions are modified to phosphoserine: S167 and S414.

Belongs to the bystin family. As to quaternary structure, binds trophinin, tastin and cytokeratins. Found in the placenta from the sixth week of pregnancy. Was localized in the cytoplasm of the syncytiotrophoblast in the chorionic villi and in endometrial decidual cells at the uteroplacental interface. After week 10, the level decreased and then disappeared from placental villi.

The protein localises to the cytoplasm. Its subcellular location is the nucleus. It is found in the nucleolus. In terms of biological role, required for processing of 20S pre-rRNA precursor and biogenesis of 40S ribosomal subunits. May be required for trophinin-dependent regulation of cell adhesion during implantation of human embryos. This chain is Bystin, found in Homo sapiens (Human).